A 152-amino-acid polypeptide reads, in one-letter code: Transcriptional regulator MraZ (152 aa).

SpoVT-AbrB domains are found at residues 5 to 52 (ASAI…PVQE) and 81 to 124 (AHEC…DEAA).

The protein belongs to the MraZ family. In terms of assembly, forms oligomers.

Its subcellular location is the cytoplasm. It localises to the nucleoid. This is Transcriptional regulator MraZ from Shewanella piezotolerans (strain WP3 / JCM 13877).